A 96-amino-acid polypeptide reads, in one-letter code: Co-chaperonin GroES (96 aa).

The protein belongs to the GroES chaperonin family. Heptamer of 7 subunits arranged in a ring. Interacts with the chaperonin GroEL.

Its subcellular location is the cytoplasm. In terms of biological role, together with the chaperonin GroEL, plays an essential role in assisting protein folding. The GroEL-GroES system forms a nano-cage that allows encapsulation of the non-native substrate proteins and provides a physical environment optimized to promote and accelerate protein folding. GroES binds to the apical surface of the GroEL ring, thereby capping the opening of the GroEL channel. The chain is Co-chaperonin GroES from Thiobacillus denitrificans (strain ATCC 25259 / T1).